The primary structure comprises 225 residues: NAD(P)H-quinone oxidoreductase subunit K, chloroplastic (225 aa).

Positions 43, 44, 108, and 139 each coordinate [4Fe-4S] cluster.

Belongs to the complex I 20 kDa subunit family. NDH is composed of at least 16 different subunits, 5 of which are encoded in the nucleus. It depends on [4Fe-4S] cluster as a cofactor.

The protein resides in the plastid. The protein localises to the chloroplast thylakoid membrane. It carries out the reaction a plastoquinone + NADH + (n+1) H(+)(in) = a plastoquinol + NAD(+) + n H(+)(out). The enzyme catalyses a plastoquinone + NADPH + (n+1) H(+)(in) = a plastoquinol + NADP(+) + n H(+)(out). NDH shuttles electrons from NAD(P)H:plastoquinone, via FMN and iron-sulfur (Fe-S) centers, to quinones in the photosynthetic chain and possibly in a chloroplast respiratory chain. The immediate electron acceptor for the enzyme in this species is believed to be plastoquinone. Couples the redox reaction to proton translocation, and thus conserves the redox energy in a proton gradient. In Arabidopsis thaliana (Mouse-ear cress), this protein is NAD(P)H-quinone oxidoreductase subunit K, chloroplastic.